A 95-amino-acid polypeptide reads, in one-letter code: Probable FAD-linked sulfhydryl oxidase OPG072 (95 aa).

At Met1–Arg8 the chain is on the intravirion side. The 95-residue stretch at Met1 to Leu95 folds into the ERV/ALR sulfhydryl oxidase domain. The chain crosses the membrane as a helical span at residues Ala9 to Gly25. The Virion surface segment spans residues Asn26–Leu95. A disulfide bridge links Cys43 with Cys46.

The protein belongs to the orthopoxvirus OPG072 family. As to quaternary structure, interacts with OPG128/A2.5; this interaction involves formation of a transient disulfide-bonded intermediate, allowing disulfide bond transfer. Requires FAD as cofactor.

It is found in the virion membrane. It localises to the host cytoplasm. It catalyses the reaction 2 R'C(R)SH + O2 = R'C(R)S-S(R)CR' + H2O2. FAD-dependent sulfhydryl oxidase that catalyzes disulfide bond formation. The complete pathway for formation of disulfide bonds in intracellular virion membrane proteins sequentially involves thiol-disulfide transfer between OPG072/E10, OPG128/A2.5 and OPG088/G4. The chain is Probable FAD-linked sulfhydryl oxidase OPG072 (OPG072) from Bos taurus (Bovine).